We begin with the raw amino-acid sequence, 198 residues long: Coagulation factor XIII A chain (198 aa).

The segment at 1–36 is disordered; that stretch reads MSESSGTAFGGRRAIPPNTSNAAENDPPTVELQGLV. Ser2 carries the post-translational modification N-acetylserine. A propeptide spans 2–38 (activation peptide); it reads SESSGTAFGGRRAIPPNTSNAAENDPPTVELQGLVPR.

It belongs to the transglutaminase superfamily. Transglutaminase family. In terms of assembly, tetramer of two A chains (F13A1) and two B (F13B) chains. It depends on Ca(2+) as a cofactor. The activation peptide is released by thrombin.

It localises to the cytoplasm. Its subcellular location is the secreted. It catalyses the reaction L-glutaminyl-[protein] + L-lysyl-[protein] = [protein]-L-lysyl-N(6)-5-L-glutamyl-[protein] + NH4(+). Functionally, factor XIII is activated by thrombin and calcium ion to a transglutaminase that catalyzes the formation of gamma-glutamyl-epsilon-lysine cross-links between fibrin chains, thus stabilizing the fibrin clot. Also cross-link alpha-2-plasmin inhibitor, or fibronectin, to the alpha chains of fibrin. The chain is Coagulation factor XIII A chain (F13A1) from Bos taurus (Bovine).